The following is a 198-amino-acid chain: ATP-dependent Clp protease proteolytic subunit (198 aa).

Ser-98 (nucleophile) is an active-site residue. His-123 is a catalytic residue.

The protein belongs to the peptidase S14 family. As to quaternary structure, fourteen ClpP subunits assemble into 2 heptameric rings which stack back to back to give a disk-like structure with a central cavity, resembling the structure of eukaryotic proteasomes.

Its subcellular location is the cytoplasm. It carries out the reaction Hydrolysis of proteins to small peptides in the presence of ATP and magnesium. alpha-casein is the usual test substrate. In the absence of ATP, only oligopeptides shorter than five residues are hydrolyzed (such as succinyl-Leu-Tyr-|-NHMec, and Leu-Tyr-Leu-|-Tyr-Trp, in which cleavage of the -Tyr-|-Leu- and -Tyr-|-Trp bonds also occurs).. Cleaves peptides in various proteins in a process that requires ATP hydrolysis. Has a chymotrypsin-like activity. Plays a major role in the degradation of misfolded proteins. The protein is ATP-dependent Clp protease proteolytic subunit of Halothermothrix orenii (strain H 168 / OCM 544 / DSM 9562).